We begin with the raw amino-acid sequence, 103 residues long: Small ribosomal subunit protein uS10 (103 aa).

The protein belongs to the universal ribosomal protein uS10 family. Part of the 30S ribosomal subunit.

Involved in the binding of tRNA to the ribosomes. This Neisseria gonorrhoeae (strain NCCP11945) protein is Small ribosomal subunit protein uS10.